The chain runs to 137 residues: uncharacterized protein (137 aa).

A helical membrane pass occupies residues 75–91; it reads MFLDAMVILAVASGVSL. Residues 93 to 116 are disordered; the sequence is PQLPGRRSHNASTPGAKKPGKDHG.

The protein resides in the membrane. This is an uncharacterized protein from Saccharomyces cerevisiae (strain ATCC 204508 / S288c) (Baker's yeast).